Here is a 377-residue protein sequence, read N- to C-terminus: Chaperone protein DnaJ (377 aa).

In terms of domain architecture, J spans 5–69; that stretch reads DYYEVLGVSK…NKRANYDQFG (65 aa). The CR-type zinc-finger motif lies at 134 to 216; that stretch reads GTEKEISIRK…CHGKGTETKN (83 aa). 8 residues coordinate Zn(2+): Cys147, Cys150, Cys164, Cys167, Cys190, Cys193, Cys204, and Cys207. 4 CXXCXGXG motif repeats span residues 147-154, 164-171, 190-197, and 204-211; these read CETCDGSG, CHYCNGSG, CPVCNGTG, and CPTCHGKG.

This sequence belongs to the DnaJ family. In terms of assembly, homodimer. Zn(2+) serves as cofactor.

The protein localises to the cytoplasm. Participates actively in the response to hyperosmotic and heat shock by preventing the aggregation of stress-denatured proteins and by disaggregating proteins, also in an autonomous, DnaK-independent fashion. Unfolded proteins bind initially to DnaJ; upon interaction with the DnaJ-bound protein, DnaK hydrolyzes its bound ATP, resulting in the formation of a stable complex. GrpE releases ADP from DnaK; ATP binding to DnaK triggers the release of the substrate protein, thus completing the reaction cycle. Several rounds of ATP-dependent interactions between DnaJ, DnaK and GrpE are required for fully efficient folding. Also involved, together with DnaK and GrpE, in the DNA replication of plasmids through activation of initiation proteins. This Staphylococcus carnosus (strain TM300) protein is Chaperone protein DnaJ.